The primary structure comprises 473 residues: MELGKTKRVHIVGIGGAGMSAIAELLLKSGFAVSGSDLSTGEVTDKLQQHGAVIYRGHEAGQVADCDVVVYSSAVRPDANVEISEALKSGIPVVKRDEMLGELMRYKSGICVAGTHGKTTTTAMIATMLIESGESPTVMIGGVSDYLKGSTVVGEGRYMVIEADEFDRAFLRLTPTIAVLNSLESEHMDTYGTLDELKRSFIEFANKVPFYGRVICSVDWPEIRRIIGSLNRRLTTVGIEEPADVTAGDIVMDHGRATFTITAFGTDYPGVCLNVPGRHNILNALSAFATGLELGIEPERLIAGLGRYSGMRRRFQVKFRDSRGLMVIDDYAHHPSEVKATVKAARSGWPDARVIAVFQPHLFSRTLEFADEYGWALSRADGVYVAAVYPSREKQEDFPGVDGALVAEAVRRAGGRQVAFVPDRDELLAAVLNEGAEPAPGGTILLFMGAGDITVLATEVAGRVSGGEGHARA.

114-120 serves as a coordination point for ATP; sequence GTHGKTT.

It belongs to the MurCDEF family.

It localises to the cytoplasm. The catalysed reaction is UDP-N-acetyl-alpha-D-muramate + L-alanine + ATP = UDP-N-acetyl-alpha-D-muramoyl-L-alanine + ADP + phosphate + H(+). It functions in the pathway cell wall biogenesis; peptidoglycan biosynthesis. Cell wall formation. This Chlorobium luteolum (strain DSM 273 / BCRC 81028 / 2530) (Pelodictyon luteolum) protein is UDP-N-acetylmuramate--L-alanine ligase.